Here is a 205-residue protein sequence, read N- to C-terminus: Cryptic plasmid protein C (205 aa).

The disordered stretch occupies residues 142 to 205 (THGYSDPDDP…RAGNAGKGRF (64 aa)). Positions 155–174 (QSMTQAKDLPRNTQEAAQSI) are enriched in polar residues. The span at 189 to 205 (QAKKPRRRAGNAGKGRF) shows a compositional bias: basic residues.

In Neisseria gonorrhoeae, this protein is Cryptic plasmid protein C (cppC).